The following is a 517-amino-acid chain: MDIIGGQHLRQMWDDLADVYGHKTALICESSGGVVNRYSYLELNQEINRTANLFYTLGIRKGDKVALHLDNCPEFIFCWFGLAKIGAIMVPINARLLREESAWILQNSQACLLVTSAQFYPMYQQIQQEDATQLRHICLTDVALPADDGVSSFTQLKNQQPATLCYAPPLSTDDTAEILFTSGTTSRPKGVVITHYNLRFAGYYSAWQCALRDDDVYLTVMPAFHIDCQCTAAMAAFSAGATFVLVEKYSARAFWGQVQKYRATITECIPMMIRTLMVQPPSANDRQHRLREVMFYLNLSEQEKDTFCERFGVRLLTSYGMTETIVGIIGDRPGDKRRWPSIGRAGFCYDAEIRDDHNRPLPAGEIGEICIKGVPGKTIFKEYFLNPKATAKVLEADGWLHTGDTGYRDEEGFFYFIDRRCNMIKRGGENVSCVELENIIATHPKIQDIVVVGIKDSIRDEAIKAFVVLNEGETLSEEEFFRFCEQNMAKFKVPSYLEIRKDLPRNCSGKIIRKNLK.

It belongs to the ATP-dependent AMP-binding enzyme family.

It catalyses the reaction 4-(trimethylamino)butanoate + ATP + CoA = 4-(trimethylamino)butanoyl-CoA + AMP + diphosphate. The enzyme catalyses crotonobetaine + ATP + CoA = crotonobetainyl-CoA + AMP + diphosphate. The catalysed reaction is (R)-carnitine + ATP + CoA = (R)-carnitinyl-CoA + AMP + diphosphate. It functions in the pathway amine and polyamine metabolism; carnitine metabolism. Its function is as follows. Catalyzes the transfer of CoA to carnitine, generating the initial carnitinyl-CoA needed for the CaiB reaction cycle. Also has activity toward crotonobetaine and gamma-butyrobetaine. This Escherichia coli O157:H7 protein is Crotonobetaine/carnitine--CoA ligase.